We begin with the raw amino-acid sequence, 182 residues long: Probable phosphoheptose isomerase (182 aa).

The region spanning 29–182 is the SIS domain; it reads ISSAISSGNK…MICAMIDEKF (154 aa). 44–46 is a substrate binding site; it reads NGG. Residues H53 and E57 each coordinate Zn(2+). Residues E57, 86–87, 112–114, S117, and Q164 each bind substrate; these read ND and STS. The Zn(2+) site is built by Q164 and H172.

Belongs to the SIS family. GmhA subfamily. Zn(2+) is required as a cofactor.

The protein localises to the cytoplasm. The catalysed reaction is 2 D-sedoheptulose 7-phosphate = D-glycero-alpha-D-manno-heptose 7-phosphate + D-glycero-beta-D-manno-heptose 7-phosphate. It functions in the pathway carbohydrate biosynthesis; D-glycero-D-manno-heptose 7-phosphate biosynthesis; D-glycero-alpha-D-manno-heptose 7-phosphate and D-glycero-beta-D-manno-heptose 7-phosphate from sedoheptulose 7-phosphate: step 1/1. Its function is as follows. Catalyzes the isomerization of sedoheptulose 7-phosphate in D-glycero-D-manno-heptose 7-phosphate. The sequence is that of Probable phosphoheptose isomerase from Thermoplasma acidophilum (strain ATCC 25905 / DSM 1728 / JCM 9062 / NBRC 15155 / AMRC-C165).